Reading from the N-terminus, the 145-residue chain is Cytochrome c550 (145 aa).

The N-terminal stretch at 1–24 is a signal peptide; sequence MNKNNVLRGLLVLAGLSLSSLALA. One can recognise a Cytochrome c domain in the interval 60–142; that stretch reads LAVEIGASAY…AIRSYLESVH (83 aa). Positions 73, 76, 77, and 119 each coordinate heme c.

Monomer. Interacts with the quinoprotein ethanol dehydrogenase (QEDH) ExaA. Binds 1 heme group per subunit.

The protein resides in the periplasm. It participates in alcohol metabolism; ethanol degradation; acetate from ethanol. In terms of biological role, is an essential component of the ethanol oxidation system that allows P.aeruginosa to grow on ethanol as the sole carbon and energy source. Is the direct electron acceptor of the quinoprotein ethanol dehydrogenase (QEDH). The polypeptide is Cytochrome c550 (Pseudomonas aeruginosa (strain ATCC 15692 / DSM 22644 / CIP 104116 / JCM 14847 / LMG 12228 / 1C / PRS 101 / PAO1)).